The following is a 382-amino-acid chain: Proton extrusion protein PxcA (382 aa).

A run of 4 helical transmembrane segments spans residues 162–182, 257–277, 305–325, and 340–360; these read ILLL…TYIV, AIKN…VCLV, IILF…TVLL, and FILL…KYWI.

It belongs to the CemA family.

The protein resides in the cell inner membrane. Required for H(+) efflux immediately after light irradiation to form a rapid H(+) concentration gradient across the thylakoid membranes. Together with PxcL, contributes to transient H(+) uptake following dark to light transition. In Parasynechococcus marenigrum (strain WH8102), this protein is Proton extrusion protein PxcA.